Consider the following 422-residue polypeptide: Protein king tubby 2 (422 aa).

The segment at 49–169 (PSNPDQIISS…ASGHNDAEGD (121 aa)) is disordered. Positions 57–81 (SSGSPTTVTATGTTTGSVTTTPTSP) are enriched in low complexity.

The protein belongs to the TUB family.

It is found in the cytoplasm. The protein localises to the nucleus. This Culex quinquefasciatus (Southern house mosquito) protein is Protein king tubby 2 (king-tubby2).